Consider the following 132-residue polypeptide: Small ribosomal subunit protein uS8 (132 aa).

Belongs to the universal ribosomal protein uS8 family. As to quaternary structure, part of the 30S ribosomal subunit. Contacts proteins S5 and S12.

In terms of biological role, one of the primary rRNA binding proteins, it binds directly to 16S rRNA central domain where it helps coordinate assembly of the platform of the 30S subunit. This chain is Small ribosomal subunit protein uS8, found in Christiangramia forsetii (strain DSM 17595 / CGMCC 1.15422 / KT0803) (Gramella forsetii).